A 292-amino-acid polypeptide reads, in one-letter code: Large ribosomal subunit protein bL19m (292 aa).

The segment at 39 to 68 (GPGRRQITGPSEPGVFQPPPKPVIVDKRGP) is disordered. Ser-77 carries the post-translational modification Phosphoserine.

Belongs to the bacterial ribosomal protein bL19 family. In terms of assembly, component of the mitochondrial ribosome large subunit (39S) which comprises a 16S rRNA and about 50 distinct proteins.

Its subcellular location is the mitochondrion. The protein is Large ribosomal subunit protein bL19m (MRPL19) of Bos taurus (Bovine).